The chain runs to 156 residues: MSPLVAVLVFFSAALGVPGTGVAGNPHGLDAIFEPPVTPAPPTRAPRREELEWDDEDHPLLGLEPPVGSRCHPYIAYSLPPDMTAVTSVVVKPYCSPPEVILWASGTAYLVNPFVAIQALAIGEPLNEAALKELGEVAVHKDSLPPLRYNGGPPAE.

The signal sequence occupies residues 1-16; the sequence is MSPLVAVLVFFSAALG. Residues 21 to 141 form an interaction with gH region; it reads GVAGNPHGLD…KELGEVAVHK (121 aa). Residues 50-156 form the gL alphaherpesvirus-type domain; that stretch reads ELEWDDEDHP…LRYNGGPPAE (107 aa). The cysteines at positions 71 and 95 are disulfide-linked.

It belongs to the herpesviridae glycoprotein L (gL) family. Alphaherpesvirinae gL subfamily. In terms of assembly, interacts with glycoprotein H (gH); this interaction is necessary for the correct processing and cell surface expression of gH. The heterodimer gH/gL seems to interact with gB trimers during fusion. O-glycosylated, and sialylated.

It localises to the virion membrane. The protein resides in the host cell membrane. It is found in the host Golgi apparatus. Its subcellular location is the host trans-Golgi network. Its function is as follows. The heterodimer glycoprotein H-glycoprotein L is required for the fusion of viral and plasma membranes leading to virus entry into the host cell. Acts as a functional inhibitor of gH and maintains gH in an inhibited form. Upon binding to host integrins, gL dissociates from gH leading to activation of the viral fusion glycoproteins gB and gH. The sequence is that of Envelope glycoprotein L from Sus scrofa (Pig).